We begin with the raw amino-acid sequence, 572 residues long: Urease subunit alpha (572 aa).

In terms of domain architecture, Urease spans 136–572 (GGIDTHIHWI…VPLAQRYFLF (437 aa)). Positions 141, 143, and 224 each coordinate Ni(2+). Lysine 224 carries the N6-carboxylysine modification. Histidine 226 is a binding site for substrate. Ni(2+) contacts are provided by histidine 253 and histidine 279. Histidine 327 (proton donor) is an active-site residue. Aspartate 367 lines the Ni(2+) pocket.

It belongs to the metallo-dependent hydrolases superfamily. Urease alpha subunit family. As to quaternary structure, heterotrimer of UreA (gamma), UreB (beta) and UreC (alpha) subunits. Three heterotrimers associate to form the active enzyme. Requires Ni cation as cofactor. Post-translationally, carboxylation allows a single lysine to coordinate two nickel ions.

The protein resides in the cytoplasm. It catalyses the reaction urea + 2 H2O + H(+) = hydrogencarbonate + 2 NH4(+). It participates in nitrogen metabolism; urea degradation; CO(2) and NH(3) from urea (urease route): step 1/1. The polypeptide is Urease subunit alpha (Actinobacillus pleuropneumoniae (Haemophilus pleuropneumoniae)).